Here is a 1198-residue protein sequence, read N- to C-terminus: Sterol 3-beta-glucosyltransferase (1198 aa).

A compositionally biased stretch (polar residues) spans 1–11; the sequence is MPITQIISASD. Disordered regions lie at residues 1–89 and 124–162; these read MPIT…DNAD and SQVDSEESDSSDSFQENIGQNEVKSKKENLKTKSHPEVP. A compositionally biased stretch (basic residues) spans 35-51; sequence RHHRLSRSLSKFKRWRG. Residues 52-67 are compositionally biased toward low complexity; sequence RSNSSLSMGSSEQQEL. Position 76 is a phosphoserine (serine 76). A compositionally biased stretch (basic and acidic residues) spans 146–162; sequence VKSKKENLKTKSHPEVP. The region spanning 187 to 236 is the GRAM 1 domain; it reads AKLRQRFCLDEQEPFLNDFPAWLLKDVLVQGHIFITTKHFLFFAYLPKNP. The region spanning 238–336 is the PH domain; sequence SVKMSGNLNI…WVNALKKEQF (99 aa). The interval 427–465 is disordered; the sequence is KSSFGKETPATAEQKNNGEDSKYLNVPTSAVPSSENGKK. Positions 452 to 461 are enriched in polar residues; that stretch reads VPTSAVPSSE. The GRAM 2 domain occupies 570–636; the sequence is ERFRYHFKFN…VDVETCYKEK (67 aa). Serine 693 bears the Phosphoserine mark. UDP-alpha-D-glucose-binding residues include serine 749, arginine 750, aspartate 752, asparagine 1025, asparagine 1053, valine 1054, histidine 1056, histidine 1069, serine 1072, glycine 1073, threonine 1074, aspartate 1093, and glutamine 1094.

Belongs to the glycosyltransferase 28 family.

It localises to the cytoplasm. The protein localises to the membrane. It catalyses the reaction a sterol + UDP-alpha-D-glucose = a sterol 3-beta-D-glucoside + UDP + H(+). The enzyme catalyses ergosterol + UDP-alpha-D-glucose = ergosteryl 3-beta-D-glucoside + UDP + H(+). Sterol glycosyltransferase responsible for the glycosylation of ergosterol to form ergosterol-glucoside. Also shows activity in vitro on other sterols such as cholesterol, beta-sitosterol, stigmasterol and tomatidine. In contrasts to what is observed in Pichia pastoris and Aspergillus oryzae, is not involved in cytoplasm to vacuole transport (Cvt), pexophagy or nonselective autophagy in Saccharomyces cerevisiae. The chain is Sterol 3-beta-glucosyltransferase from Saccharomyces cerevisiae (strain YJM789) (Baker's yeast).